The following is a 188-amino-acid chain: Pyridoxal 5'-phosphate synthase subunit PdxT (188 aa).

An L-glutamine-binding site is contributed by 46–48 (GES). Cysteine 78 functions as the Nucleophile in the catalytic mechanism. Residues arginine 105 and 134–135 (IR) each bind L-glutamine. Catalysis depends on charge relay system residues histidine 170 and glutamate 172.

This sequence belongs to the glutaminase PdxT/SNO family. As to quaternary structure, in the presence of PdxS, forms a dodecamer of heterodimers. Only shows activity in the heterodimer.

The enzyme catalyses aldehydo-D-ribose 5-phosphate + D-glyceraldehyde 3-phosphate + L-glutamine = pyridoxal 5'-phosphate + L-glutamate + phosphate + 3 H2O + H(+). It catalyses the reaction L-glutamine + H2O = L-glutamate + NH4(+). It participates in cofactor biosynthesis; pyridoxal 5'-phosphate biosynthesis. Functionally, catalyzes the hydrolysis of glutamine to glutamate and ammonia as part of the biosynthesis of pyridoxal 5'-phosphate. The resulting ammonia molecule is channeled to the active site of PdxS. The chain is Pyridoxal 5'-phosphate synthase subunit PdxT from Clostridium kluyveri (strain ATCC 8527 / DSM 555 / NBRC 12016 / NCIMB 10680 / K1).